Here is a 91-residue protein sequence, read N- to C-terminus: Small ribosomal subunit protein uS19 (91 aa).

It belongs to the universal ribosomal protein uS19 family.

Its function is as follows. Protein S19 forms a complex with S13 that binds strongly to the 16S ribosomal RNA. This is Small ribosomal subunit protein uS19 from Synechococcus sp. (strain WH7803).